Reading from the N-terminus, the 135-residue chain is Large ribosomal subunit protein uL16c (135 aa).

Belongs to the universal ribosomal protein uL16 family. As to quaternary structure, part of the 50S ribosomal subunit.

Its subcellular location is the plastid. The protein localises to the chloroplast. The sequence is that of Large ribosomal subunit protein uL16c from Ranunculus macranthus (Large buttercup).